A 355-amino-acid polypeptide reads, in one-letter code: Probable dual-specificity RNA methyltransferase RlmN (355 aa).

Glutamate 92 serves as the catalytic Proton acceptor. The 233-residue stretch at phenylalanine 98–arginine 330 folds into the Radical SAM core domain. Cysteine 105 and cysteine 341 form a disulfide bridge. Residues cysteine 112, cysteine 116, and cysteine 119 each contribute to the [4Fe-4S] cluster site. S-adenosyl-L-methionine-binding positions include glycine 164 to glutamate 165, serine 196, serine 219 to histidine 221, and asparagine 297. Residue cysteine 341 is the S-methylcysteine intermediate of the active site.

This sequence belongs to the radical SAM superfamily. RlmN family. [4Fe-4S] cluster serves as cofactor.

It is found in the cytoplasm. The enzyme catalyses adenosine(2503) in 23S rRNA + 2 reduced [2Fe-2S]-[ferredoxin] + 2 S-adenosyl-L-methionine = 2-methyladenosine(2503) in 23S rRNA + 5'-deoxyadenosine + L-methionine + 2 oxidized [2Fe-2S]-[ferredoxin] + S-adenosyl-L-homocysteine. It catalyses the reaction adenosine(37) in tRNA + 2 reduced [2Fe-2S]-[ferredoxin] + 2 S-adenosyl-L-methionine = 2-methyladenosine(37) in tRNA + 5'-deoxyadenosine + L-methionine + 2 oxidized [2Fe-2S]-[ferredoxin] + S-adenosyl-L-homocysteine. In terms of biological role, specifically methylates position 2 of adenine 2503 in 23S rRNA and position 2 of adenine 37 in tRNAs. This Oceanobacillus iheyensis (strain DSM 14371 / CIP 107618 / JCM 11309 / KCTC 3954 / HTE831) protein is Probable dual-specificity RNA methyltransferase RlmN.